A 255-amino-acid chain; its full sequence is Wtf element wtf15 (255 aa).

The segment at 19–78 (KAGHEIDLEGSPPSEHNSEEKSTLPSNSDILTSANPVSQASETPDHSIESNTGSTQSPTS) is disordered. Composition is skewed to polar residues over residues 41–60 (TLPS…QASE) and 67–78 (ESNTGSTQSPTS). A run of 4 helical transmembrane segments spans residues 85–105 (FSFC…CVLP), 112–132 (FLIA…SGSI), 162–182 (FLKT…LVLL), and 187–208 (WGWK…SFCL).

It belongs to the WTF family.

It is found in the spore membrane. Its function is as follows. May act in meiotic drive. This is Wtf element wtf15 from Schizosaccharomyces pombe (strain 972 / ATCC 24843) (Fission yeast).